The sequence spans 248 residues: Ubiquinone biosynthesis O-methyltransferase (248 aa).

Positions 41, 72, 93, and 136 each coordinate S-adenosyl-L-methionine.

Belongs to the methyltransferase superfamily. UbiG/COQ3 family.

The catalysed reaction is a 3-demethylubiquinol + S-adenosyl-L-methionine = a ubiquinol + S-adenosyl-L-homocysteine + H(+). The enzyme catalyses a 3-(all-trans-polyprenyl)benzene-1,2-diol + S-adenosyl-L-methionine = a 2-methoxy-6-(all-trans-polyprenyl)phenol + S-adenosyl-L-homocysteine + H(+). Its pathway is cofactor biosynthesis; ubiquinone biosynthesis. In terms of biological role, O-methyltransferase that catalyzes the 2 O-methylation steps in the ubiquinone biosynthetic pathway. This chain is Ubiquinone biosynthesis O-methyltransferase, found in Rhizobium rhizogenes (strain K84 / ATCC BAA-868) (Agrobacterium radiobacter).